Here is a 346-residue protein sequence, read N- to C-terminus: Uroporphyrinogen decarboxylase (346 aa).

Substrate is bound by residues 26–30 (RQAGR), Asp76, Tyr153, Ser208, and His323.

It belongs to the uroporphyrinogen decarboxylase family. Homodimer.

It is found in the cytoplasm. The enzyme catalyses uroporphyrinogen III + 4 H(+) = coproporphyrinogen III + 4 CO2. It functions in the pathway porphyrin-containing compound metabolism; protoporphyrin-IX biosynthesis; coproporphyrinogen-III from 5-aminolevulinate: step 4/4. Its function is as follows. Catalyzes the decarboxylation of four acetate groups of uroporphyrinogen-III to yield coproporphyrinogen-III. The sequence is that of Uroporphyrinogen decarboxylase from Prochlorococcus marinus (strain MIT 9301).